The sequence spans 992 residues: MMNNGCDEVSPRSEIALLGSVETMLEKIYEKHNHRLPISVETRRKLSSISEELALETLRKVFNKPYLKTLDGLIMYFVKGTVTVDGSPRLSPGESPVQSPRTPAKKSCRASQDVSLDLETPSPKFMKREENGGSKYIPPLLALGELEFKKAFLLLSYIGGESLVEEVISGDQIRKWKDLPMVSYEAAVWNRLGQRYCSPKERRRPLEGDSGMTHYYQCHVATDGSYKFKGHLLENTGTHLHKVLGDDNVLTVKFDKVLGVETYCNDLYSTYKGIAKNGIMVGLRRYRFFVFKDGGKEEKKKDVSTKGVKCYFIRTDSTASIDMQNPYIFAGKSMHEARMHFMHVNTLSSLPNYMSRFSLILSKTKTLEVDMTGITFEQIDDIHCHDQDDKDVLDKNGKPCIHSDGTGYISEDLARMCPVNIFKGKSMRSNNIQSKNLNFEGQGPCGQEPPLLIQFRIFYNGYAVKGTFLTNKKLPPRTVQVRPSMIKVYEDRTLSNLSTFNSLEVVTTSNPPRKARLSRNLVALLSYGGVPNDFFLNILRNTLEESKTIFYSERAAFKAAINYGDDQYTADMILVGIPLDEPYLKDRLSYLLKTERNALKAGRFPIDESYYIMGTVDPTGELKENEICVILHSGQISGDVLVYRNPGLHFGDIHVLKATYVKALEDYVGNAKFAVFFPQKGPRSLGDEIAGGDFDGDMYFISRNPKLLEHFKPSEPWVSSSKPSKIYCGRKPSELSEEELEEELFKMFLKARFCKRDVIGMAADCWLGIMDPFLTLGDESAKEKYERKKNILKLIDIYYDALDAPKKGAKVDLPPDLEIKNFPHYMERDPKRDFRSTSILGLIFDTVDSHNAEEPPPSEISKLWYFEDEPVPKSHMDKFTSWYENYRSEMSQAMMETDKVKRNQLTNEVIQRYKQDFYGAAGFEDSNKSLEELYPQALALYNVVYDYAIQEGVAKCTFAWNVAGPVLCKFYLKKTKDKSVVASTSVLKKLLG.

Positions 88-113 are disordered; sequence PRLSPGESPVQSPRTPAKKSCRASQD.

Belongs to the RdRP family.

The enzyme catalyses RNA(n) + a ribonucleoside 5'-triphosphate = RNA(n+1) + diphosphate. In terms of biological role, probably involved in the RNA silencing pathway and required for the generation of small interfering RNAs (siRNAs). The polypeptide is Probable RNA-dependent RNA polymerase 3 (RDR3) (Arabidopsis thaliana (Mouse-ear cress)).